Here is a 93-residue protein sequence, read N- to C-terminus: YcgL domain-containing protein VIBHAR_01387 (93 aa).

Residues 1–84 (MLCSIYKSSR…PPENLLEKYK (84 aa)) form the YcgL domain.

The chain is YcgL domain-containing protein VIBHAR_01387 from Vibrio campbellii (strain ATCC BAA-1116).